Consider the following 681-residue polypeptide: Terpene synthase 6, chloroplastic (681 aa).

Asp433, Asp437, Asn577, and Glu585 together coordinate Mg(2+). The DDXXD motif motif lies at Asp433–Asp437.

The protein belongs to the terpene synthase family. Mg(2+) is required as a cofactor. Expressed in leaves.

It localises to the plastid. It is found in the chloroplast. Its pathway is secondary metabolite biosynthesis; terpenoid biosynthesis. In terms of biological role, may be involved in the biosynthesis of ent-kaurene diterpenoids natural products such as oridonin, miltiradiene, eriocalyxin B and nezukol, known to exhibit antitumor, anti-inflammatory and antibacterial activities. The chain is Terpene synthase 6, chloroplastic from Isodon rubescens (Rabdosia rubescens).